Reading from the N-terminus, the 198-residue chain is Probable chemoreceptor glutamine deamidase CheD (198 aa).

The protein belongs to the CheD family.

It carries out the reaction L-glutaminyl-[protein] + H2O = L-glutamyl-[protein] + NH4(+). Probably deamidates glutamine residues to glutamate on methyl-accepting chemotaxis receptors (MCPs), playing an important role in chemotaxis. This Xanthomonas campestris pv. campestris (strain 8004) protein is Probable chemoreceptor glutamine deamidase CheD.